Consider the following 149-residue polypeptide: Myosin, essential light chain (149 aa).

2 consecutive EF-hand domains span residues 7–42 (SMIDEMKDGFPLFDNKGDGKIDGAQLGDVLRSFGLN) and 79–114 (GSYEDFFEGLKLFDKEGTGLISGAELRHVLATLGEK).

As to quaternary structure, myosin is a hexamer of 2 heavy chains and 4 light chains (two regulatory light chains and two essential light chains).

The protein is Myosin, essential light chain of Branchiostoma floridae (Florida lancelet).